Reading from the N-terminus, the 1222-residue chain is Alpha-mannosidase D (1222 aa).

The signal sequence occupies residues 1–21 (MESSKFVKIIWVFGIWILVFT). Topologically, residues 22–1170 (FLIIYNNYDY…KYNRPNHLAL (1149 aa)) are extracellular. Positions 71 and 73 each coordinate Zn(2+). N175 carries N-linked (GlcNAc...) asparagine glycosylation. Residues D185 and H453 each contribute to the Zn(2+) site. The Nucleophile role is filled by D185. Residues N492, N496, N547, N551, N566, N613, N665, N768, N785, N952, N981, N1069, and N1084 are each glycosylated (N-linked (GlcNAc...) asparagine). Residues 493-549 (KSNNKTNNNNNNNNKNNNNNNNNNNNNNNNLKNTNSISTTGSSSSSGSGSSNNNNNT) show a composition bias toward low complexity. Positions 493–554 (KSNNKTNNNN…NNNNTVNKSE (62 aa)) are disordered. Residues 1171 to 1191 (ILSLSIGIPAGILIIVIALVV) form a helical membrane-spanning segment. Over 1192–1222 (TYKKRKNRKTLTSSNSSSNLIQQEDQTDYSP) the chain is Cytoplasmic. Over residues 1202–1211 (LTSSNSSSNL) the composition is skewed to low complexity. The segment at 1202-1222 (LTSSNSSSNLIQQEDQTDYSP) is disordered. Over residues 1212–1222 (IQQEDQTDYSP) the composition is skewed to polar residues.

It belongs to the glycosyl hydrolase 38 family. Zn(2+) is required as a cofactor.

The protein localises to the membrane. The enzyme catalyses Hydrolysis of terminal, non-reducing alpha-D-mannose residues in alpha-D-mannosides.. This chain is Alpha-mannosidase D (manD), found in Dictyostelium discoideum (Social amoeba).